Reading from the N-terminus, the 733-residue chain is Forkhead box protein K1 (733 aa).

Position 2 is an N-acetylalanine (alanine 2). Residues 2-40 are interaction with SIN3A and SIN3B; sequence AEVGEDSGARALLALRSAPCSPVLCAAAAAAAFPAAAPP. A disordered region spans residues 36–79; it reads AAAPPPAPAQPQPPPGPPPPPPPPLPPGAIAGAGSSGGSSGVSG. A compositionally biased stretch (pro residues) spans 37-62; the sequence is AAPPPAPAQPQPPPGPPPPPPPPLPP. The required for interaction with FOXO4 and MEF2C stretch occupies residues 95–420; sequence AASVRQSPGP…PLSSRSAPAS (326 aa). Serine 101 carries the phosphoserine modification. The FHA domain occupies 123-175; that stretch reads VTIGRNSSQGSVDLSMGLSSFISRRHLQLSFQEPHFYLRCLGKNGVFVDGAFQ. Omega-N-methylarginine is present on residues arginine 161 and arginine 191. Phosphoserine is present on residues serine 213, serine 223, serine 239, and serine 243. Phosphothreonine occurs at positions 245 and 247. 4 positions are modified to phosphoserine: serine 253, serine 257, serine 295, and serine 299. 2 disordered regions span residues 287-306 and 413-436; these read ASEQ…ESKP and SSRS…GLQT. A DNA-binding region (fork-head) is located at residues 305–400; that stretch reads KPPFSYAQLI…EQAFRKRRQR (96 aa). A phosphoserine mark is found at serine 416 and serine 420. The residue at position 422 (threonine 422) is a Phosphothreonine. Phosphoserine is present on serine 428. Residue threonine 436 is modified to Phosphothreonine. A phosphoserine mark is found at serine 441, serine 445, and serine 459. A compositionally biased stretch (low complexity) spans 676 to 697; it reads VAATATTTPATATTASASASST. The interval 676 to 733 is disordered; sequence VAATATTTPATATTASASASSTGEPEVKRSRVEEPSGAVTTPAGVIAAAGPQGPGTGE. Residues 700 to 709 are compositionally biased toward basic and acidic residues; it reads PEVKRSRVEE.

Interacts with SIN3A and SIN3B (via PAH2) to form a complex which represses transcription. Component of SIN3A-, but not SIN3B-, containing multiprotein complexes. Interacts with FOXO4 and MEF2C; both interactions inhibit FOXO4 and MEF2C transactivation activity. Interacts (when phosphorylated) with YWHAE/14-3-3-epsilon; promotes sequestration in the cytoplasm and leads to impaired ability to bind DNA. Interacts with FHL2. Interacts with SRF. Interacts with DVL2 and DVL3; the interaction induces DVL2 nuclear translocation. Interacts with BAP1 (when phosphorylated). Accessory component of the polycomb repressive deubiquitinase (PR-DUB) complex, at least composed of BAP1, one of ASXL1, ASXL2 or (probably) ASXL3 and one of MBD5 or MBD6. The PR-DUB core associates with a number of accessory proteins, including FOXK1, FOXK2, KDM1B, HCFC1 and OGT. Post-translationally, phosphorylation by GSK3 (GSK3A or GSK3B) promotes interaction with YWHAE/14-3-3-epsilon and retention in the cytoplasm. In response to mTORC1 signaling, phosphorylation by GSK3 is prevented, leading to translocation to the nucleus. As to expression, expressed both developing and adult tissues. In adults, significant expression is seen in tumors of the brain, colon and lymph node.

The protein localises to the nucleus. The protein resides in the cytoplasm. Transcriptional regulator involved in different processes such as glucose metabolism, aerobic glycolysis, muscle cell differentiation and autophagy. Recognizes and binds the forkhead DNA sequence motif (5'-GTAAACA-3') and can both act as a transcription activator or repressor, depending on the context. Together with FOXK2, acts as a key regulator of metabolic reprogramming towards aerobic glycolysis, a process in which glucose is converted to lactate in the presence of oxygen. Acts by promoting expression of enzymes for glycolysis (such as hexokinase-2 (HK2), phosphofructokinase, pyruvate kinase (PKLR) and lactate dehydrogenase), while suppressing further oxidation of pyruvate in the mitochondria by up-regulating pyruvate dehydrogenase kinases PDK1 and PDK4. Probably plays a role in gluconeogenesis during overnight fasting, when lactate from white adipose tissue and muscle is the main substrate. Involved in mTORC1-mediated metabolic reprogramming: in response to mTORC1 signaling, translocates into the nucleus and regulates the expression of genes associated with glycolysis and downstream anabolic pathways, such as HIF1A, thereby regulating glucose metabolism. Together with FOXK2, acts as a negative regulator of autophagy in skeletal muscle: in response to starvation, enters the nucleus, binds the promoters of autophagy genes and represses their expression, preventing proteolysis of skeletal muscle proteins. Acts as a transcriptional regulator of the myogenic progenitor cell population in skeletal muscle. Binds to the upstream enhancer region (CCAC box) of myoglobin (MB) gene, regulating the myogenic progenitor cell population. Promotes muscle progenitor cell proliferation by repressing the transcriptional activity of FOXO4, thereby inhibiting myogenic differentiation. Involved in remodeling processes of adult muscles that occur in response to physiological stimuli. Required to correct temporal orchestration of molecular and cellular events necessary for muscle repair. Represses myogenic differentiation by inhibiting MEFC activity. Positively regulates Wnt/beta-catenin signaling by translocating DVL into the nucleus. Reduces virus replication, probably by binding the interferon stimulated response element (ISRE) to promote antiviral gene expression. Accessory component of the polycomb repressive deubiquitinase (PR-DUB) complex; recruits the PR-DUB complex to specific FOXK1-bound genes. The chain is Forkhead box protein K1 from Homo sapiens (Human).